We begin with the raw amino-acid sequence, 386 residues long: Histidine decarboxylase (386 aa).

Substrate is bound at residue His120. N6-(pyridoxal phosphate)lysine is present on Lys233.

Belongs to the group II decarboxylase family. Homotetramer. The cofactor is pyridoxal 5'-phosphate.

It catalyses the reaction L-histidine + H(+) = histamine + CO2. This Vibrio campbellii (strain ATCC BAA-1116) protein is Histidine decarboxylase.